The primary structure comprises 999 residues: Hypoxia up-regulated protein 1 (999 aa).

The N-terminal stretch at 1-32 is a signal peptide; the sequence is MADKVRRQRPRRRVCWALVAVLLADLLALSDT. N155, N222, and N515 each carry an N-linked (GlcNAc...) asparagine glycan. S567 bears the Phosphoserine mark. Residues 578 to 694 form a disordered region; the sequence is GNTISSLFGG…KKQKPARKRR (117 aa). An N-linked (GlcNAc...) asparagine glycan is attached at N596. 2 stretches are compositionally biased toward basic and acidic residues: residues 611 to 626 and 641 to 672; these read GSKD…KEEA and PKGD…KAEA. N830, N862, and N869 each carry an N-linked (GlcNAc...) asparagine glycan. At K883 the chain carries N6-acetyllysine. The disordered stretch occupies residues 909–999; it reads AKFTKPRPRP…QKRPLKNDEL (91 aa). Residues N922 and N931 are each glycosylated (N-linked (GlcNAc...) asparagine). The short motif at 996–999 is the Prevents secretion from ER element; the sequence is NDEL.

It belongs to the heat shock protein 70 family. As to quaternary structure, part of a large chaperone multiprotein complex comprising DNAJB11, HSP90B1, HSPA5, HYOU, PDIA2, PDIA4, PDIA6, PPIB, SDF2L1, UGGT1 and very small amounts of ERP29, but not, or at very low levels, CALR nor CANX. In terms of tissue distribution, highly expressed in tissues that contain well-developed endoplasmic reticulum and synthesize large amounts of secretory proteins. Highly expressed in liver and pancreas and lower expression in brain and kidney. Also expressed in macrophages within aortic atherosclerotic plaques, and in breast cancers.

Its subcellular location is the endoplasmic reticulum lumen. In terms of biological role, has a pivotal role in cytoprotective cellular mechanisms triggered by oxygen deprivation. Promotes HSPA5/BiP-mediated ATP nucleotide exchange and thereby activates the unfolded protein response (UPR) pathway in the presence of endoplasmic reticulum stress. May play a role as a molecular chaperone and participate in protein folding. This is Hypoxia up-regulated protein 1 (HYOU1) from Homo sapiens (Human).